The sequence spans 502 residues: NAD(P)H-quinone oxidoreductase chain 4, chloroplastic (502 aa).

14 helical membrane-spanning segments follow: residues 4-24 (FPWLTIIVGLPIFAGTLIFFF), 37-57 (ICICILELLITAYVFCYHFQL), 87-107 (VGPILLTGFITTLATLAAWPV), 113-130 (LFHFLMLAMYSGQIGLFS), 134-154 (LLLFFIMWEFELIPVYLLLSM), 167-187 (FILYTAGGSIFLLMGVLGMGL), 208-228 (ALEILFYFGFLIGYAVKLPII), 242-262 (HYSTCMLLAGILLKMGAYGLV), 272-292 (AHSIFSPWLIIVGAIQIIYAA), 305-325 (IAYSSVSHMGFIIIGICSITD), 330-350 (GAILQMISHGFIGAALFFLAG), 374-396 (IFTMFSSFSMASLALPGMSGFAA), 416-436 (ILITFVTAIGMILTPIYSLSM), and 464-484 (LFVSICIFLPVIGIGIYPDFV).

This sequence belongs to the complex I subunit 4 family.

It localises to the plastid. The protein localises to the chloroplast thylakoid membrane. It carries out the reaction a plastoquinone + NADH + (n+1) H(+)(in) = a plastoquinol + NAD(+) + n H(+)(out). The catalysed reaction is a plastoquinone + NADPH + (n+1) H(+)(in) = a plastoquinol + NADP(+) + n H(+)(out). The polypeptide is NAD(P)H-quinone oxidoreductase chain 4, chloroplastic (Ranunculus macranthus (Large buttercup)).